We begin with the raw amino-acid sequence, 358 residues long: Uroporphyrinogen decarboxylase (358 aa).

Substrate-binding positions include 27-31 (RQAGR), Asp-77, Tyr-154, Ser-209, and His-327.

It belongs to the uroporphyrinogen decarboxylase family. In terms of assembly, homodimer.

It localises to the cytoplasm. It catalyses the reaction uroporphyrinogen III + 4 H(+) = coproporphyrinogen III + 4 CO2. Its pathway is porphyrin-containing compound metabolism; protoporphyrin-IX biosynthesis; coproporphyrinogen-III from 5-aminolevulinate: step 4/4. Its function is as follows. Catalyzes the decarboxylation of four acetate groups of uroporphyrinogen-III to yield coproporphyrinogen-III. This Azoarcus sp. (strain BH72) protein is Uroporphyrinogen decarboxylase.